The chain runs to 109 residues: MIGKERIRIRLKAYDYRVLDQSTGEIVDTARRTGAQIAGPIPLPTVKNKYCVLRSPHVDKKSREAFEIRTHKRLLDILEPTQQTVDALMKLDLPAGVDVEIKAFGKEHK.

The protein belongs to the universal ribosomal protein uS10 family. As to quaternary structure, part of the 30S ribosomal subunit.

In terms of biological role, involved in the binding of tRNA to the ribosomes. The polypeptide is Small ribosomal subunit protein uS10 (Koribacter versatilis (strain Ellin345)).